A 537-amino-acid chain; its full sequence is Glutamyl-tRNA reductase, chloroplastic (537 aa).

The transit peptide at 1–48 (MMASTTSATAAGGAFAAAKTRAGSSAAGGGACARVAAGGRRRSGVVVR) directs the protein to the chloroplast. Substrate is bound by residues 134-137 (TCNR), serine 194, 199-201 (EGQ), and glutamine 205. Cysteine 135 functions as the Nucleophile in the catalytic mechanism. An NADP(+)-binding site is contributed by 276 to 281 (GAGKMG).

It belongs to the glutamyl-tRNA reductase family.

Its subcellular location is the plastid. It localises to the chloroplast. It carries out the reaction (S)-4-amino-5-oxopentanoate + tRNA(Glu) + NADP(+) = L-glutamyl-tRNA(Glu) + NADPH + H(+). It functions in the pathway porphyrin-containing compound metabolism; protoporphyrin-IX biosynthesis; 5-aminolevulinate from L-glutamyl-tRNA(Glu): step 1/2. Its function is as follows. Catalyzes the NADPH-dependent reduction of glutamyl-tRNA(Glu) to glutamate 1-semialdehyde (GSA). The sequence is that of Glutamyl-tRNA reductase, chloroplastic from Oryza sativa subsp. indica (Rice).